The primary structure comprises 103 residues: uncharacterized protein (103 aa).

Residues 1–103 are disordered; that stretch reads MAGARRRARC…WRGGSCTSQR (103 aa). Over residues 35–44 the composition is skewed to low complexity; sequence GSGQPRWWPW. Composition is skewed to basic residues over residues 55 to 65 and 74 to 84; these read RRPGPGRRARS and RPPHSRTRARR.

The protein belongs to the epstein-barr virus RPMS1 family.

This is an uncharacterized protein from Homo sapiens (Human).